A 204-amino-acid chain; its full sequence is Protein DESIGUAL 4 (204 aa).

A run of 4 helical transmembrane segments spans residues 13–33 (IITV…VAGF), 60–80 (FVLG…ANVI), 107–127 (CLFL…NGIW), and 143–163 (VFSI…IYYI). A disordered region spans residues 177 to 204 (KPNKTKPSELKPIPTEPNEAEPNSTPNP). N-linked (GlcNAc...) asparagine glycosylation occurs at Asn-179.

Belongs to the DESIGUAL family. Only expressed in inflorescences.

It is found in the endoplasmic reticulum membrane. In Arabidopsis thaliana (Mouse-ear cress), this protein is Protein DESIGUAL 4.